A 582-amino-acid polypeptide reads, in one-letter code: Semenogelin-2 (582 aa).

The first 23 residues, 1 to 23 (MKSIILFVLSLLLILEKQAAVMG), serve as a signal peptide directing secretion. Disordered stretches follow at residues 25 to 62 (KGGS…SKGS), 131 to 156 (KGGQ…KGIF), 173 to 192 (KEQA…GSQS), 272 to 477 (NLNQ…EQRQ), and 502 to 554 (VEGK…SGAH). Residues 50–59 (GQKDKQHTES) show a composition bias toward basic and acidic residues. 2 stretches are compositionally biased toward polar residues: residues 137 to 151 (HGTQ…NSPS) and 174 to 192 (EQAS…GSQS). The span at 292 to 310 (RTEERQLNHGEKSVQKDVS) shows a compositional bias: basic and acidic residues. Over residues 325–335 (KSQNQVTIPSQ) the composition is skewed to polar residues. Basic and acidic residues predominate over residues 336–345 (DQEHGHKENK). Polar residues predominate over residues 385-395 (KSQNQVTIPSQ). Positions 396-405 (DQEHGHKENK) are enriched in basic and acidic residues. The segment covering 445–455 (KSQNQVTIPSQ) has biased composition (polar residues). A compositionally biased stretch (basic and acidic residues) spans 456–465 (DQEHGHKENK). Composition is skewed to polar residues over residues 466-477 (ISYQSSSTEQRQ) and 506-529 (SQIQ…NSGK). Basic and acidic residues predominate over residues 537 to 546 (LLSHEQEGRY).

It belongs to the semenogelin family. As to quaternary structure, interacts with SERPINA5.

It localises to the secreted. Functionally, participates in the formation of a gel matrix (sperm coagulum) entrapping the accessory gland secretions and ejaculated spermatozoa. The sequence is that of Semenogelin-2 (SEMG2) from Macaca nemestrina (Pig-tailed macaque).